A 286-amino-acid chain; its full sequence is Shikimate dehydrogenase (NADP(+)) (286 aa).

Shikimate contacts are provided by residues 20–22 (SLS) and T65. The Proton acceptor role is filled by K69. D81 provides a ligand contact to NADP(+). Shikimate contacts are provided by N90 and D105. Residues 128 to 132 (GAGGA) and T217 contribute to the NADP(+) site. Y219 contacts shikimate. G240 lines the NADP(+) pocket.

This sequence belongs to the shikimate dehydrogenase family. Homodimer.

The catalysed reaction is shikimate + NADP(+) = 3-dehydroshikimate + NADPH + H(+). Its pathway is metabolic intermediate biosynthesis; chorismate biosynthesis; chorismate from D-erythrose 4-phosphate and phosphoenolpyruvate: step 4/7. Functionally, involved in the biosynthesis of the chorismate, which leads to the biosynthesis of aromatic amino acids. Catalyzes the reversible NADPH linked reduction of 3-dehydroshikimate (DHSA) to yield shikimate (SA). This chain is Shikimate dehydrogenase (NADP(+)), found in Syntrophobacter fumaroxidans (strain DSM 10017 / MPOB).